The chain runs to 342 residues: tRNA N6-adenosine threonylcarbamoyltransferase (342 aa).

Positions 111 and 115 each coordinate Fe cation. Residues 134 to 138 (LVSGG), Asp-167, Gly-180, and Asn-276 contribute to the substrate site. Fe cation is bound at residue Asp-304.

It belongs to the KAE1 / TsaD family. Requires Fe(2+) as cofactor.

The protein resides in the cytoplasm. The enzyme catalyses L-threonylcarbamoyladenylate + adenosine(37) in tRNA = N(6)-L-threonylcarbamoyladenosine(37) in tRNA + AMP + H(+). Its function is as follows. Required for the formation of a threonylcarbamoyl group on adenosine at position 37 (t(6)A37) in tRNAs that read codons beginning with adenine. Is involved in the transfer of the threonylcarbamoyl moiety of threonylcarbamoyl-AMP (TC-AMP) to the N6 group of A37, together with TsaE and TsaB. TsaD likely plays a direct catalytic role in this reaction. The polypeptide is tRNA N6-adenosine threonylcarbamoyltransferase (Helicobacter acinonychis (strain Sheeba)).